A 278-amino-acid polypeptide reads, in one-letter code: Large ribosomal subunit protein uL2 (278 aa).

2 disordered regions span residues 1-58 and 224-278; these read MAIR…GGGH and VVMN…GKKR. Residues 23–33 are compositionally biased toward basic and acidic residues; sequence EITRDHPEKSL. Residues 37–58 show a composition bias toward basic residues; that stretch reads LHGRGGRNAHGRITTRHKGGGH. Over residues 253–268 the composition is skewed to basic and acidic residues; that stretch reads PEGRTRKPKKASDKLI. Basic residues predominate over residues 269-278; the sequence is VRRRRTGKKR.

Belongs to the universal ribosomal protein uL2 family. Part of the 50S ribosomal subunit. Forms a bridge to the 30S subunit in the 70S ribosome.

Its function is as follows. One of the primary rRNA binding proteins. Required for association of the 30S and 50S subunits to form the 70S ribosome, for tRNA binding and peptide bond formation. It has been suggested to have peptidyltransferase activity; this is somewhat controversial. Makes several contacts with the 16S rRNA in the 70S ribosome. The sequence is that of Large ribosomal subunit protein uL2 from Mycolicibacterium vanbaalenii (strain DSM 7251 / JCM 13017 / BCRC 16820 / KCTC 9966 / NRRL B-24157 / PYR-1) (Mycobacterium vanbaalenii).